The chain runs to 59 residues: Conotoxin Sr5.4 (59 aa).

The signal sequence occupies residues Met-1–Ala-22. Positions Gln-23–His-44 are excised as a propeptide.

This sequence belongs to the conotoxin T superfamily. Post-translationally, contains 2 disulfide bonds that can be either 'C1-C3, C2-C4' or 'C1-C4, C2-C3', since these disulfide connectivities have been observed for conotoxins with cysteine framework V (for examples, see AC P0DQQ7 and AC P81755). In terms of tissue distribution, expressed by the venom duct.

Its subcellular location is the secreted. This is Conotoxin Sr5.4 from Conus spurius (Alphabet cone).